A 768-amino-acid polypeptide reads, in one-letter code: Phosphoribosylformylglycinamidine synthase subunit PurL (768 aa).

The active site involves His44. ATP-binding residues include Tyr47 and Lys86. A Mg(2+)-binding site is contributed by Glu88. Substrate contacts are provided by residues 89–92 (SHNH) and Arg111. His90 functions as the Proton acceptor in the catalytic mechanism. Asp112 is a binding site for Mg(2+). Substrate is bound at residue Gln235. Position 263 (Asp263) interacts with Mg(2+). Residue 307–309 (ESQ) participates in substrate binding. ATP-binding residues include Asp518 and Gly555. A Mg(2+)-binding site is contributed by Asn556. Position 558 (Ser558) interacts with substrate.

Belongs to the FGAMS family. In terms of assembly, monomer. Part of the FGAM synthase complex composed of 1 PurL, 1 PurQ and 2 PurS subunits.

It is found in the cytoplasm. It carries out the reaction N(2)-formyl-N(1)-(5-phospho-beta-D-ribosyl)glycinamide + L-glutamine + ATP + H2O = 2-formamido-N(1)-(5-O-phospho-beta-D-ribosyl)acetamidine + L-glutamate + ADP + phosphate + H(+). It participates in purine metabolism; IMP biosynthesis via de novo pathway; 5-amino-1-(5-phospho-D-ribosyl)imidazole from N(2)-formyl-N(1)-(5-phospho-D-ribosyl)glycinamide: step 1/2. In terms of biological role, part of the phosphoribosylformylglycinamidine synthase complex involved in the purines biosynthetic pathway. Catalyzes the ATP-dependent conversion of formylglycinamide ribonucleotide (FGAR) and glutamine to yield formylglycinamidine ribonucleotide (FGAM) and glutamate. The FGAM synthase complex is composed of three subunits. PurQ produces an ammonia molecule by converting glutamine to glutamate. PurL transfers the ammonia molecule to FGAR to form FGAM in an ATP-dependent manner. PurS interacts with PurQ and PurL and is thought to assist in the transfer of the ammonia molecule from PurQ to PurL. This Synechococcus sp. (strain JA-2-3B'a(2-13)) (Cyanobacteria bacterium Yellowstone B-Prime) protein is Phosphoribosylformylglycinamidine synthase subunit PurL.